Here is a 657-residue protein sequence, read N- to C-terminus: SAGA complex subunit SGF73 (657 aa).

The Zn(2+) site is built by C78, C81, H93, and C98. Disordered regions lie at residues 98–225 (CAGA…TEKH), 287–353 (EKRA…VNLT), 469–532 (QQQQ…SQDT), and 572–636 (ESNQ…NVSG). The segment covering 107–118 (TDPRDESTRETI) has biased composition (basic and acidic residues). Positions 131–163 (DDDNSNDNNNDDDDDDDNDDNEDDDDADDDDDN) are enriched in acidic residues. 2 stretches are compositionally biased toward polar residues: residues 174-193 (SSFN…TPNM) and 200-210 (TGTPQTFSSSI). The SCA7 domain occupies 220–286 (NPTEKHLIDF…EHQTKIGAAA (67 aa)). Positions 306-321 (QKKHTQQQKQGQRSKQ) are enriched in basic residues. 2 stretches are compositionally biased toward low complexity: residues 325–336 (NGGKSAKNGGKS) and 469–493 (QQQQ…QPTQ). The span at 504-516 (ATNSSFNANVSSK) shows a compositional bias: polar residues. Positions 517 to 526 (QIQQQQQQQQ) are enriched in low complexity. The segment covering 572-583 (ESNQDSHLSGTH) has biased composition (polar residues). The span at 584 to 594 (NNNSSKNGNNN) shows a compositional bias: low complexity. A compositionally biased stretch (polar residues) spans 600–636 (ASISSPNTSVNSIQSPPSVNSVNGSGQGVSTGINVSG).

This sequence belongs to the ataxin-7 family. As to quaternary structure, component of the 1.8 MDa SAGA (Spt-Ada-Gcn5 acetyltransferase) complex, which is composed of 19 subunits TRA1, SPT7, TAF5, NGG1/ADA3, SGF73, SPT20/ADA5, SPT8, TAF12, TAF6, HFI1/ADA1, UBP8, GCN5, ADA2, SPT3, SGF29, TAF10, TAF9, SGF11 and SUS1. The SAGA complex is composed of 4 modules, namely the HAT (histone acetyltransferase) module (GCN5, ADA2, NGG1/ADA3 and SGF29), the DUB (deubiquitinating) module (UBP8, SGF11, SGF73 and SUS1), the core or TAF (TBP-associated factor) module (TAF5, TAF6, TAF9, TAF10 and TAF12), and the Tra1 or SPT (Suppressor of Ty) module (TRA1, HFI1/ADA1, SPT3, SPT7, SPT8 and SPT20/ADA5). The Tra1/SPT module binds activators, the core module recruits TBP (TATA-binding protein), the HAT module contains the histone H3 acetyltransferase GCN5, and the DUB module comprises the histone H2B deubiquitinase UBP8. Also identified in an altered form of SAGA, named SALSA (SAGA altered, Spt8 absent) or SLIK (SAGA-like) complex, which contains a C-terminal truncated form of SPT7 and is missing SPT8. However, it has been shown that the SAGA and SAGA-like SALSA/SLIK transcriptional coactivators are structurally and biochemically equivalent.

The protein resides in the nucleus. It is found in the cytoplasm. Component of the transcription coactivator SAGA complex. SAGA acts as a general cofactor required for essentially all RNA polymerase II transcription. At the promoters, SAGA is required for transcription pre-initiation complex (PIC) recruitment. It influences RNA polymerase II transcriptional activity through different activities such as TBP interaction (via core/TAF module) and promoter selectivity, interaction with transcription activators (via Tra1/SPT module), and chromatin modification through histone acetylation (via HAT module) and deubiquitination (via DUB module). SAGA preferentially acetylates histones H3 (to form H3K9ac, H3K14ac, H3K18ac and H3K23ac) and H2B and deubiquitinates histone H2B. SAGA interacts with DNA via upstream activating sequences (UASs). Also identified in a modified version of SAGA named SALSA or SLIK. The cleavage of SPT7 and the absence of the SPT8 subunit in SLIK neither drive any major conformational differences in its structure compared with SAGA, nor significantly affect HAT, DUB, or DNA-binding activities. SGF73 tethers the DUB module to the rest of the SAGA complex through its central domain and activates the ubiquitin hydrolase UBP8 by maintaining its catalytic domain in an active conformation. SGF73 mediates recruitment of the TREX-2 mRNA export factors SAC3 and THP1 to SAGA, which is crucial to target TREX-2 to the nuclear pore complex (NPC) necessary for export of mRNA. Upon environmental stress, involved in the bypass of the canonical mRNA export process for the immediate export of stress-related transcripts to maintain proteostasis. The protein is SAGA complex subunit SGF73 (SGF73) of Saccharomyces cerevisiae (strain ATCC 204508 / S288c) (Baker's yeast).